The primary structure comprises 690 residues: MARLRVYELARKLNMSPKELLQELEELGVNVKSHMSYVDEEMANIIIDLLEEDNRKAKQPSKPKKEKGEEEVEKEVVEKKKKKKITLKPDELKLDIIAEKIGVPQNKIIQDMFVKRGIALRPGQILKLEEVEQILKEYKIEIEIEEEQQTSVEEVDEFELLEKRYQELYEKEKDKLVPRPPVVTVMGHVDHGKTTLLDRIRSTRVAEREEGGITQSIGAYQVEVNGKKITFIDTPGHELFTEMRARGAQATDIVVLVVAADDGVMPQTIEAYNHAKAANVPIIVAINKIDKPNANVEKTKQELVEKLGLIPEEWGGDTIVVPISARTGQGVDELLEMILLVAEMNEIKCYPEGPARAVIIESKLDKKMGPVASVIVKDGVLKVGDAVVASNTYGKVRNLFDDNMRPIREAYPSQPVMILGFEDVPDVHSNVYVVESVEKAKEIVEKRLQRLEAQKQSRKHINLEDLMKMMQEKEKKVLNLILKADTYGSVAALKNAINKLQSKEIELNIVHAGVGEISTSDVMLAAAVDGVILGFRVKVNNQARRLAEQEGVDVRTYSIIYKLVEDLKLALEGMLEPEEVEEVIGHGEIRKVFKISKVGKVAGVQMLDGKADRNGFVRIYRNGQLVFEGKIESLKHYKEDVNVVEAPQECGIKFAGFDDIQEGDELEFYVIRKVKRKPTFVEEQSDQEQK.

The 169-residue stretch at 178–346 (PRPPVVTVMG…MILLVAEMNE (169 aa)) folds into the tr-type G domain. The G1 stretch occupies residues 187–194 (GHVDHGKT). 187–194 (GHVDHGKT) is a GTP binding site. The tract at residues 212-216 (GITQS) is G2. Residues 233 to 236 (DTPG) form a G3 region. Residues 233–237 (DTPGH) and 287–290 (NKID) each bind GTP. A G4 region spans residues 287–290 (NKID). Residues 324-326 (SAR) are G5.

It belongs to the TRAFAC class translation factor GTPase superfamily. Classic translation factor GTPase family. IF-2 subfamily.

It localises to the cytoplasm. One of the essential components for the initiation of protein synthesis. Protects formylmethionyl-tRNA from spontaneous hydrolysis and promotes its binding to the 30S ribosomal subunits. Also involved in the hydrolysis of GTP during the formation of the 70S ribosomal complex. This Thermotoga sp. (strain RQ2) protein is Translation initiation factor IF-2.